We begin with the raw amino-acid sequence, 144 residues long: MPGRRVRKDVARDVKKPDFVEPVKPVDKPEIAVKKAPLRELAASITLSALSAKKLIDMELSKIRKEYEKDEFLRNFPLPGFEISEMELELNFAVDEVKDGGEVIVSFDEEKLSKLSGAISKMKMKIVGKSLQQFETIDGQKIVK.

This is an uncharacterized protein from Archaeoglobus fulgidus (strain ATCC 49558 / DSM 4304 / JCM 9628 / NBRC 100126 / VC-16).